The sequence spans 408 residues: S-adenosylmethionine synthase (408 aa).

140–145 (GQGSVD) lines the ATP pocket.

Belongs to the AdoMet synthase 2 family. Requires Mg(2+) as cofactor.

It catalyses the reaction L-methionine + ATP + H2O = S-adenosyl-L-methionine + phosphate + diphosphate. Its pathway is amino-acid biosynthesis; S-adenosyl-L-methionine biosynthesis; S-adenosyl-L-methionine from L-methionine: step 1/1. Functionally, catalyzes the formation of S-adenosylmethionine from methionine and ATP. This is S-adenosylmethionine synthase from Caldivirga maquilingensis (strain ATCC 700844 / DSM 13496 / JCM 10307 / IC-167).